The chain runs to 941 residues: RNA-binding protein 4F (941 aa).

Basic and acidic residues predominate over residues Met-1 to Lys-13. The interval Met-1–Gln-149 is disordered. Acidic residues predominate over residues Glu-14–Asp-32. Residues Gly-42–Pro-52 show a composition bias toward polar residues. A Phosphoserine modification is found at Ser-43. Positions Glu-55–Gln-65 are enriched in basic and acidic residues. The span at Ser-87 to Glu-98 shows a compositional bias: acidic residues. The segment covering Asp-111–Ser-134 has biased composition (low complexity). At Ser-153 the chain carries Phosphoserine. The disordered stretch occupies residues Arg-629–Ser-713. Over residues Glu-671–Gln-680 the composition is skewed to low complexity. Ser-713 bears the Phosphoserine mark. Tyr-717 bears the Phosphotyrosine mark. Ser-718 carries the phosphoserine modification. The region spanning Asn-724–Pro-801 is the RRM domain. Composition is skewed to basic and acidic residues over residues Glu-862–Asp-902, Gln-913–Glu-922, and Ser-930–Asp-941. The tract at residues Glu-862–Asp-941 is disordered.

The protein resides in the cytoplasm. In terms of biological role, may be involved in gene regulation during development. Binds RNA. The sequence is that of RNA-binding protein 4F from Drosophila melanogaster (Fruit fly).